The primary structure comprises 144 residues: Maximins 2/H8 type 2 (144 aa).

An N-terminal signal peptide occupies residues 1-18 (MNFKYIVAVSFLIASAYA). The propeptide occupies 19–43 (RSEENEIQSLSQRDVLEEESLREIR). Asn-70 carries the asparagine amide modification. Positions 74 to 123 (TAEEHEVMKRLETVMRDLDSLDYPEEASERETRGFNQEEIANLFTKKEKR) are excised as a propeptide. Ile-143 bears the Isoleucine amide mark.

This sequence belongs to the bombinin family. Expressed by the skin glands.

It localises to the secreted. Its function is as follows. Maximin-2 shows antibacterial activity against both Gram-positive and Gram-negative bacteria. It also shows antimicrobial activity against the fungus C.albicans, but not against A.flavus nor P.uticale. It has little hemolytic activity. Maximin-H8 shows antimicrobial activity against bacteria and against the fungus C.albicans. Shows strong hemolytic activity. The protein is Maximins 2/H8 type 2 of Bombina maxima (Giant fire-bellied toad).